Consider the following 270-residue polypeptide: Acyl-[acyl-carrier-protein]--UDP-N-acetylglucosamine O-acyltransferase (270 aa).

It belongs to the transferase hexapeptide repeat family. LpxA subfamily. As to quaternary structure, homotrimer.

It localises to the cytoplasm. The enzyme catalyses a (3R)-hydroxyacyl-[ACP] + UDP-N-acetyl-alpha-D-glucosamine = a UDP-3-O-[(3R)-3-hydroxyacyl]-N-acetyl-alpha-D-glucosamine + holo-[ACP]. Its pathway is glycolipid biosynthesis; lipid IV(A) biosynthesis; lipid IV(A) from (3R)-3-hydroxytetradecanoyl-[acyl-carrier-protein] and UDP-N-acetyl-alpha-D-glucosamine: step 1/6. Involved in the biosynthesis of lipid A, a phosphorylated glycolipid that anchors the lipopolysaccharide to the outer membrane of the cell. This Helicobacter pylori (strain G27) protein is Acyl-[acyl-carrier-protein]--UDP-N-acetylglucosamine O-acyltransferase.